A 107-amino-acid chain; its full sequence is MPELEKHAFRMKLFAGKEVEYKKRHDEIWPELVALLHEAGVSDYSIHLDPETSILFGVLTRPKVHGMAALPEHPVMKKWWAHMADIMESNPDNSPVAKDLVTVFHLP.

Tyr21 lines the substrate pocket. Catalysis depends on His25, which acts as the Proton donor. Substrate is bound by residues Tyr44 and 79 to 80 (WW).

It belongs to the rhamnose mutarotase family. As to quaternary structure, homodimer.

It localises to the cytoplasm. It carries out the reaction alpha-L-rhamnose = beta-L-rhamnose. It functions in the pathway carbohydrate metabolism; L-rhamnose metabolism. Involved in the anomeric conversion of L-rhamnose. This is L-rhamnose mutarotase from Agrobacterium fabrum (strain C58 / ATCC 33970) (Agrobacterium tumefaciens (strain C58)).